Here is a 427-residue protein sequence, read N- to C-terminus: Trigger factor (427 aa).

The region spanning 163 to 248 is the PPIase FKBP-type domain; the sequence is GDTVVIDFVG…VNEVKAKELP (86 aa).

The protein belongs to the FKBP-type PPIase family. Tig subfamily.

It localises to the cytoplasm. The enzyme catalyses [protein]-peptidylproline (omega=180) = [protein]-peptidylproline (omega=0). In terms of biological role, involved in protein export. Acts as a chaperone by maintaining the newly synthesized protein in an open conformation. Functions as a peptidyl-prolyl cis-trans isomerase. This chain is Trigger factor (tig), found in Lactococcus lactis subsp. lactis (strain IL1403) (Streptococcus lactis).